The sequence spans 198 residues: Mediator of RNA polymerase II transcription subunit 20 (198 aa).

This sequence belongs to the Mediator complex subunit 20 family. Component of the Mediator complex.

The protein localises to the nucleus. Component of the Mediator complex, a coactivator involved in the regulated transcription of nearly all RNA polymerase II-dependent genes. Mediator functions as a bridge to convey information from gene-specific regulatory proteins to the basal RNA polymerase II transcription machinery. Mediator is recruited to promoters by direct interactions with regulatory proteins and serves as a scaffold for the assembly of a functional preinitiation complex with RNA polymerase II and the general transcription factors. The protein is Mediator of RNA polymerase II transcription subunit 20 (mdt-20) of Caenorhabditis briggsae.